The sequence spans 267 residues: Adenosine 5'-phosphosulfate reductase (267 aa).

The disordered stretch occupies residues 1 to 29; that stretch reads MPPFATIPATERNSAAQHQDPSPMSQPFD. The span at 11-25 shows a compositional bias: polar residues; it reads ERNSAAQHQDPSPMS. Positions 139, 140, 228, and 231 each coordinate [4Fe-4S] cluster. The active-site Nucleophile; cysteine thiosulfonate intermediate is C256.

The protein belongs to the PAPS reductase family. CysH subfamily. [4Fe-4S] cluster serves as cofactor.

The protein localises to the cytoplasm. It carries out the reaction [thioredoxin]-disulfide + sulfite + AMP + 2 H(+) = adenosine 5'-phosphosulfate + [thioredoxin]-dithiol. The protein operates within sulfur metabolism; hydrogen sulfide biosynthesis; sulfite from sulfate. In terms of biological role, catalyzes the formation of sulfite from adenosine 5'-phosphosulfate (APS) using thioredoxin as an electron donor. This chain is Adenosine 5'-phosphosulfate reductase, found in Pseudomonas aeruginosa (strain LESB58).